A 126-amino-acid chain; its full sequence is UPF0102 protein MXAN_3551 (126 aa).

Belongs to the UPF0102 family.

The polypeptide is UPF0102 protein MXAN_3551 (Myxococcus xanthus (strain DK1622)).